A 131-amino-acid polypeptide reads, in one-letter code: Small ribosomal subunit protein uS8 (131 aa).

The protein belongs to the universal ribosomal protein uS8 family. In terms of assembly, part of the 30S ribosomal subunit. Contacts proteins S5 and S12.

Functionally, one of the primary rRNA binding proteins, it binds directly to 16S rRNA central domain where it helps coordinate assembly of the platform of the 30S subunit. The protein is Small ribosomal subunit protein uS8 of Wolinella succinogenes (strain ATCC 29543 / DSM 1740 / CCUG 13145 / JCM 31913 / LMG 7466 / NCTC 11488 / FDC 602W) (Vibrio succinogenes).